A 470-amino-acid chain; its full sequence is MTEFPDNTRWQLWIVAFGFFMQSLDTTIVNTALPSMAKSLGESPLHMHMVVVSYVLTVAVMLPASGWLADKIGVRNIFFAAIVLFTLGSLFCALSGTLNQLVLARVLQGVGGAMMVPVGRLTVMKIVPRAQYMAAMTFVALPGQIGPLLGPALGGVLVEYASWHWIFLINIPVGIVGAMATFMLMPNYTIETRRFDLPGFLLLAIGMAVLTLALDGSKSMGISPWTLAGLAAGGAAAILLYLFHAKKNSGALFSLRLFRTPTFSLGLLGSFAGRIGSGMLPFMTPVFLQIGLGFSPFHAGLMMIPMVLGSMGMKRIVVQIVNRFGYRRVLVATTLGLALVSLLFMSVALLGWYYLLPLVLLLQGMVNSARFSSMNTLTLKDLPDTLASSGNSLLSMIMQLSMSIGVTIAGMLLGMFGQQHIGIDSSATHHVFMYTWLCMAVIIALPAIIFARVPNDTQQNMVISRRKRSL.

The Periplasmic portion of the chain corresponds to 1–11 (MTEFPDNTRWQ). The helical transmembrane segment at 12 to 32 (LWIVAFGFFMQSLDTTIVNTA) threads the bilayer. Residues 33–48 (LPSMAKSLGESPLHMH) are Cytoplasmic-facing. A helical transmembrane segment spans residues 49–69 (MVVVSYVLTVAVMLPASGWLA). Residues 70–76 (DKIGVRN) lie on the Periplasmic side of the membrane. A helical membrane pass occupies residues 77–97 (IFFAAIVLFTLGSLFCALSGT). The Cytoplasmic portion of the chain corresponds to 98–101 (LNQL). A helical membrane pass occupies residues 102 to 124 (VLARVLQGVGGAMMVPVGRLTVM). At 125 to 137 (KIVPRAQYMAAMT) the chain is on the periplasmic side. Residues 138–158 (FVALPGQIGPLLGPALGGVLV) traverse the membrane as a helical segment. Topologically, residues 159-164 (EYASWH) are cytoplasmic. Residues 165 to 185 (WIFLINIPVGIVGAMATFMLM) form a helical membrane-spanning segment. At 186–196 (PNYTIETRRFD) the chain is on the periplasmic side. The helical transmembrane segment at 197–217 (LPGFLLLAIGMAVLTLALDGS) threads the bilayer. Over 218 to 224 (KSMGISP) the chain is Cytoplasmic. A helical transmembrane segment spans residues 225–245 (WTLAGLAAGGAAAILLYLFHA). Residues 246–262 (KKNSGALFSLRLFRTPT) lie on the Periplasmic side of the membrane. The chain crosses the membrane as a helical span at residues 263–283 (FSLGLLGSFAGRIGSGMLPFM). At 284-285 (TP) the chain is on the cytoplasmic side. Residues 286–306 (VFLQIGLGFSPFHAGLMMIPM) traverse the membrane as a helical segment. Over 307 to 341 (VLGSMGMKRIVVQIVNRFGYRRVLVATTLGLALVS) the chain is Periplasmic. Residues 342–362 (LLFMSVALLGWYYLLPLVLLL) form a helical membrane-spanning segment. Residues 363–395 (QGMVNSARFSSMNTLTLKDLPDTLASSGNSLLS) are Cytoplasmic-facing. Residues 396–416 (MIMQLSMSIGVTIAGMLLGMF) form a helical membrane-spanning segment. Topologically, residues 417–430 (GQQHIGIDSSATHH) are periplasmic. Residues 431–451 (VFMYTWLCMAVIIALPAIIFA) traverse the membrane as a helical segment. At 452–470 (RVPNDTQQNMVISRRKRSL) the chain is on the cytoplasmic side.

The protein belongs to the major facilitator superfamily. TCR/Tet family.

It localises to the cell inner membrane. This chain is Putative multidrug resistance protein MdtD, found in Salmonella typhi.